The following is a 405-amino-acid chain: G1/S-specific cyclin-D (405 aa).

The 125-residue stretch at 76-200 (FYNCMEYEEA…LIVTTLQWET (125 aa)) folds into the Cyclin N-terminal domain. Positions 301–405 (YTSEDAEKTE…STPPKIFKTL (105 aa)) are disordered. The span at 311–321 (PTPSAPASTQE) shows a compositional bias: polar residues. Over residues 326–335 (QELKELKEEP) the composition is skewed to basic and acidic residues. Polar residues predominate over residues 358-380 (SEQTPSTPLNDSGFSSDVSSPAS).

This sequence belongs to the cyclin family. Cyclin D subfamily. Interacts with cdk-4; the interaction is likely involved in regulating cdk-4 activity.

Its function is as follows. In association with cdk-4, regulates the progression through the G1 phase of the cell cycle during postembryonic development. Regulates proliferation of the coelomocyte lineage and intestinal cells during late embryogenesis. In complex with cdk-4, involved in sex determination during gonadogenesis by regulating the asymmetric division of the somatic gonadal precursor cell (SGP). This Caenorhabditis elegans protein is G1/S-specific cyclin-D.